The primary structure comprises 278 residues: Potassium/proton antiporter CemA (278 aa).

Helical transmembrane passes span 60–80 (YLLLLITVPLIVNQISKSFVF), 155–175 (AMKNLLADVLAFVTFVYLIVT), 201–221 (FLIILFTDIFVGFHSTHGWEV), and 239–259 (IFLFIATFPVVLDTVFKYWIF).

This sequence belongs to the CemA family.

Its subcellular location is the plastid. It localises to the chloroplast inner membrane. The catalysed reaction is K(+)(in) + H(+)(out) = K(+)(out) + H(+)(in). Functionally, contributes to K(+)/H(+) antiport activity by supporting proton efflux to control proton extrusion and homeostasis in chloroplasts in a light-dependent manner to modulate photosynthesis. Prevents excessive induction of non-photochemical quenching (NPQ) under continuous-light conditions. Indirectly promotes efficient inorganic carbon uptake into chloroplasts. This chain is Potassium/proton antiporter CemA, found in Rhodomonas salina (Cryptomonas salina).